A 145-amino-acid polypeptide reads, in one-letter code: ATP synthase epsilon chain (145 aa).

The segment at 100 to 123 (RAQRAKQRAEDAIKTASEKHDSDE) is disordered. Over residues 106–123 (QRAEDAIKTASEKHDSDE) the composition is skewed to basic and acidic residues.

It belongs to the ATPase epsilon chain family. F-type ATPases have 2 components, CF(1) - the catalytic core - and CF(0) - the membrane proton channel. CF(1) has five subunits: alpha(3), beta(3), gamma(1), delta(1), epsilon(1). CF(0) has three main subunits: a, b and c.

It is found in the cell membrane. Its function is as follows. Produces ATP from ADP in the presence of a proton gradient across the membrane. The protein is ATP synthase epsilon chain of Latilactobacillus sakei subsp. sakei (strain 23K) (Lactobacillus sakei subsp. sakei).